The primary structure comprises 364 residues: Gap junction delta-4 protein (364 aa).

The Cytoplasmic portion of the chain corresponds to 1-19 (MEKLNLLGFLIITLNCNVT). A helical membrane pass occupies residues 20-40 (IMGMIWLIVEVLLRMLVVVLA). The Extracellular segment spans residues 41-76 (GSPIYEDEQERFICNTLQPGCANVCYDLFSPVSPLR). The chain crosses the membrane as a helical span at residues 77–97 (FWLVQSLALLLPSVVFGTYTL). At 98-128 (HRGAKLAAVGGACRPQVPDLSTAYLVHLLLR) the chain is on the cytoplasmic side. Residues 129 to 149 (MLLEAGLAFLHYFLFGFSVPA) form a helical membrane-spanning segment. The Extracellular portion of the chain corresponds to 150 to 173 (RVSCSHVPCSGAVDCYVSRPTEKS). A helical transmembrane segment spans residues 174 to 194 (LLILFFWAVSALSFLLSLADL). The Cytoplasmic segment spans residues 195–364 (LWILPRRKTL…HLRTKKSEWV (170 aa)). Positions 331–340 (HLARHSSASK) are enriched in polar residues. Residues 331-364 (HLARHSSASKPQAPCRLTTSGSAPHLRTKKSEWV) are disordered.

The protein belongs to the connexin family. Delta-type subfamily. As to quaternary structure, a connexon is composed of a hexamer of connexins.

Its subcellular location is the cell membrane. The protein resides in the cell junction. It is found in the gap junction. Its function is as follows. One gap junction consists of a cluster of closely packed pairs of transmembrane channels, the connexons, through which materials of low MW diffuse from one cell to a neighboring cell. In Mus musculus (Mouse), this protein is Gap junction delta-4 protein (Gjd4).